The sequence spans 1571 residues: MADRGCPLEAAPLPAEVRESLAELELELSEGDITQKGYEKKRAKLLARYIPLIQGIDPSLQAENRIPGPSQTTAAAPKQQKSRPTASRDERFRSDVHTEAVQAALAKYKERKMPMPSKRRSVLVHSSVETYTPPDTSSASEDEGSLRRPGRLTSTPLQSHSSVEPWLDRVIQGSSTSSSASSTSSHPGGRPTTAPSAAATPGAAATTALAGLEAHTHIDLHSAPPDVTTGLVEHSYFERPQVASVRSVPRGCSGSMLETADGVPVNSRVSSKIQQLLNTLKRPKRPPLKEFFVDDFEELLEVQQPDPNQPKPEGSETSVLRGEPLTAGVPRPPSLLATLQRWGTTQPKSPCLTALDTTGKAVYTLTYGKLWSRSLKLAYTLLNKLTSKNEPLLKPGDRVALVFPNSDPVMFMVAFYGCLLAELVPVPIEVPLTRKDAGSQQVGFLLGSCGVFLALTTDACQKGLPKAQTGEVAAFKGWPPLSWLVIDGKHLAKPPKDWHPLAQDTGTGTAYIEYKTSKEGSTVGVTVSHASLLAQCRALTQACGYSEAETLTNVLDFKRDAGLWHGVLTSVMNRMHVVSVPYALMKANPLSWIQKVCFYKARAALVKSRDMHWSLLAQRGQRDVSLSSLRMLIVADGANPWSISSCDAFLNVFQSRGLRPEVICPCASSPEALTVAIRRPPDLGGPPPRKAVLSMNGLSYGVIRVDTEEKLSVLTVQDVGQVMPGANVCVVKLEGTPYLCKTDEVGEICVSSSATGTAYYGLLGITKNVFEAVPVTTGGAPIFDRPFTRTGLLGFIGPDNLVFIVGKLDGLMVTGVRRHNADDVVATALAVEPMKFVYRGRIAVFSVTVLHDDRIVLVAEQRPDASEEDSFQWMSRVLQAIDSIHQVGVYCLALVPANTLPKAPLGGIHISETKQRFLEGTLHPCNVLMCPHTCVTNLPKPRQKQPEVGPASMIVGNLVAGKRIAQASGRELAHLEDSDQARKFLFLADVLQWRAHTTPDHPLFLLLNAKGTVTSTATCVQLHKRAERVAAALMEKGRLSVGDHVALVYPPGVDLIAAFYGCLYCGCVPVTVRPPHPQNLGTTLPTVKMIVEVSKSACVLTTQAVTRLLRSKEAAAAVDIRTWPTILDTDDIPKKKIASVFRPPSPDVLAYLDFSVSTTGILAGVKMSHAATSALCRSIKLQCELYPSRQIAICLDPYCGLGFALWCLCSVYSGHQSVLVPPLELESNVSLWLSAVSQYKARVTFCSYSVMEMCTKGLGAQTGVLRMKGVNLSCVRTCMVVAEERPRIALTQSFSKLFKDLGLPARAVSTTFGCRVNVAICLQGTAGPDPTTVYVDMRALRHDRVRLVERGSPHSLPLMESGKILPGVKVIIAHTETKGPLGDSHLGEIWVSSPHNATGYYTVYGEEALHADHFSARLSFGDTQTIWARTGYLGFLRRTELTDASGGRHDALYVVGSLDETLELRGMRYHPIDIETSVIRAHRSIAECAVFTWTNLLVVVVELDGLEQDALDLVALVTNVVLEEHYLVVGVVVIVDPGVIPINSRGEKQRMHLRDGFLADQLDPIYVAYNM.

Residues 9 to 127 (EAAPLPAEVR…KRRSVLVHSS (119 aa)) form the DMAP1-binding domain. The disordered stretch occupies residues 60–203 (LQAENRIPGP…APSAAATPGA (144 aa)). Residues 86-98 (ASRDERFRSDVHT) are compositionally biased toward basic and acidic residues. S94 carries the post-translational modification Phosphoserine. Composition is skewed to polar residues over residues 127–139 (SVET…TSSA) and 152–162 (LTSTPLQSHSS). A phosphothreonine mark is found at T132 and T155. The span at 174 to 203 (SSTSSSASSTSSHPGGRPTTAPSAAATPGA) shows a compositional bias: low complexity. 2 short sequence motifs (PXXP motif; required for interaction with CTTN) span residues 283–286 (PKRP) and 307–310 (PNQP). The tract at residues 302–327 (VQQPDPNQPKPEGSETSVLRGEPLTA) is disordered.

The protein belongs to the DIP2 family. As to quaternary structure, interacts with FSTL1; DIP2A may act as a cell surface receptor for FSTL1. Interacts (via N-terminus) with CTTN (via SH3 domain); the interaction promotes acetylation of CTTN and is required for proper synaptic transmission. Interacts with SHANK3. Low expression in all tissues tested.

It localises to the cell membrane. The protein localises to the mitochondrion. Its subcellular location is the cell projection. The protein resides in the dendritic spine. The catalysed reaction is acetate + ATP + CoA = acetyl-CoA + AMP + diphosphate. Its function is as follows. Catalyzes the de novo synthesis of acetyl-CoA in vitro. Promotes acetylation of CTTN, possibly by providing the acetyl donor, ensuring correct dendritic spine morphology and synaptic transmission. Binds to follistatin-related protein FSTL1 and may act as a cell surface receptor for FSTL1, contributing to AKT activation and subsequent FSTL1-induced survival and function of endothelial cells and cardiac myocytes. In Homo sapiens (Human), this protein is Disco-interacting protein 2 homolog A (DIP2A).